A 579-amino-acid chain; its full sequence is Fatty-acid amide hydrolase 1 (579 aa).

The chain crosses the membrane as a helical span at residues 9 to 29; sequence ALPGASGVALACCFVAAAVAL. The Cytoplasmic portion of the chain corresponds to 30 to 403; the sequence is RWSGRRTARG…GDFVDPCLGD (374 aa). Catalysis depends on lysine 142, which acts as the Charge relay system. Substrate contacts are provided by residues methionine 191, serine 217, and 238–241; that span reads IGGS. The active-site Charge relay system is serine 217. Serine 241 (acyl-ester intermediate) is an active-site residue. Serine 241 is modified (phosphoserine). An intramembrane segment occupies 404-433; sequence LVSILKLPQWLKGLLAFLVKPLLPRLSAFL. Over 434 to 579 the chain is Cytoplasmic; the sequence is SNMKSRSAGK…RLMTPEKQSS (146 aa).

It belongs to the amidase family. Homodimer. Highly expressed in the brain, small intestine, pancreas, skeletal muscle and testis. Also expressed in the kidney, liver, lung, placenta and prostate.

It localises to the endomembrane system. The protein resides in the cytoplasm. Its subcellular location is the cytoskeleton. The catalysed reaction is N-(5Z,8Z,11Z,14Z-eicosatetraenoyl)-ethanolamine + H2O = ethanolamine + (5Z,8Z,11Z,14Z)-eicosatetraenoate. It carries out the reaction (9Z)-octadecenamide + H2O = (9Z)-octadecenoate + NH4(+). The enzyme catalyses 2-(5Z,8Z,11Z,14Z-eicosatetraenoyl)-glycerol + H2O = glycerol + (5Z,8Z,11Z,14Z)-eicosatetraenoate + H(+). It catalyses the reaction N-(9Z-octadecenoyl) ethanolamine + H2O = ethanolamine + (9Z)-octadecenoate. The catalysed reaction is N-hexadecanoylethanolamine + H2O = ethanolamine + hexadecanoate. It carries out the reaction hexadecanamide + H2O = hexadecanoate + NH4(+). The enzyme catalyses tetradecamide + H2O = tetradecanoate + NH4(+). It catalyses the reaction N-(9Z-octadecenoyl)-taurine + H2O = taurine + (9Z)-octadecenoate. The catalysed reaction is (9Z,12Z,15Z)-octadecatrienamide + H2O = (9Z,12Z,15Z)-octadecatrienoate + NH4(+). It carries out the reaction (5Z,8Z,11Z,14Z)-eicosatetraenamide + H2O = (5Z,8Z,11Z,14Z)-eicosatetraenoate + NH4(+). The enzyme catalyses (6Z)-octadecenamide + H2O = (6Z)-octadecenoate + NH4(+). It catalyses the reaction (15Z)-tetracosenamide + H2O = (15Z)-tetracosenoate + NH4(+). The catalysed reaction is (8Z,11Z,14Z)-eicosatrienamide + H2O = (8Z,11Z,14Z)-eicosatrienoate + NH4(+). It carries out the reaction (11Z,14Z,17Z)-eicosatrienamide + H2O = (11Z,14Z,17Z)-eicosatrienoate + NH4(+). The enzyme catalyses (11Z,14Z)-eicosadienamide + H2O = (11Z,14Z)-eicosadienoate + NH4(+). It catalyses the reaction (9Z,12Z)-octadecadienamide + H2O = (9Z,12Z)-octadecadienoate + NH4(+). The catalysed reaction is 1-O-methyl-(5Z,8Z,11Z,14Z)-eicosatetraenoate + H2O = methanol + (5Z,8Z,11Z,14Z)-eicosatetraenoate + H(+). It carries out the reaction (11Z)-eicosenamide + H2O = (11Z)-eicosenoate + NH4(+). The enzyme catalyses N-(9Z-hexadecenoyl) ethanolamine + H2O = (9Z)-hexadecenoate + ethanolamine. It catalyses the reaction N-octadecanoyl ethanolamine + H2O = octadecanoate + ethanolamine. The catalysed reaction is N-docosanoyl-ethanolamine + H2O = docosanoate + ethanolamine. It carries out the reaction N-tetracosanoyl-taurine + H2O = tetracosanoate + taurine. The enzyme catalyses N-(15Z-tetracosenoyl)-ethanolamine + H2O = (15Z)-tetracosenoate + ethanolamine. It catalyses the reaction N-docosanoyl-taurine + H2O = docosanoate + taurine. The catalysed reaction is N-(15Z-tetracosenoyl)-taurine + H2O = (15Z)-tetracosenoate + taurine. It carries out the reaction N-tricosanoyl-taurine + H2O = tricosanoate + taurine. The enzyme catalyses (9Z)-octadecenoate + glycine = N-(9Z-octadecenoyl)glycine + H2O. It catalyses the reaction N-(5Z,8Z,11Z,14Z)-eicosatetraenoyl-glycine + H2O = (5Z,8Z,11Z,14Z)-eicosatetraenoate + glycine. The catalysed reaction is N-(5Z,8Z,11Z,14Z-eicosatetraenoyl)-L-serine + H2O = (5Z,8Z,11Z,14Z)-eicosatetraenoate + L-serine. With respect to regulation, inhibited by O-aryl carbamates and alpha-keto heterocycles. Inhibited by trifluoromethyl ketone. Its function is as follows. Catalyzes the hydrolysis of endogenous amidated lipids like the sleep-inducing lipid oleamide ((9Z)-octadecenamide), the endocannabinoid anandamide (N-(5Z,8Z,11Z,14Z-eicosatetraenoyl)-ethanolamine), as well as other fatty amides, to their corresponding fatty acids, thereby regulating the signaling functions of these molecules. Hydrolyzes polyunsaturated substrate anandamide preferentially as compared to monounsaturated substrates. It can also catalyze the hydrolysis of the endocannabinoid 2-arachidonoylglycerol (2-(5Z,8Z,11Z,14Z-eicosatetraenoyl)-glycerol). FAAH cooperates with PM20D1 in the hydrolysis of amino acid-conjugated fatty acids such as N-fatty acyl glycine and N-fatty acyl-L-serine, thereby acting as a physiological regulator of specific subsets of intracellular, but not of extracellular, N-fatty acyl amino acids. This Homo sapiens (Human) protein is Fatty-acid amide hydrolase 1 (FAAH).